The following is a 600-amino-acid chain: Aspartate--tRNA(Asp/Asn) ligase (600 aa).

Residue E174 coordinates L-aspartate. The segment at 198–201 (QLFK) is aspartate. R220 contributes to the L-aspartate binding site. Residues 220–222 (RDE) and Q229 contribute to the ATP site. H457 contributes to the L-aspartate binding site. E491 contributes to the ATP binding site. An L-aspartate-binding site is contributed by R498. An ATP-binding site is contributed by 543-546 (GLDR).

The protein belongs to the class-II aminoacyl-tRNA synthetase family. Type 1 subfamily. In terms of assembly, homodimer.

It is found in the cytoplasm. It carries out the reaction tRNA(Asx) + L-aspartate + ATP = L-aspartyl-tRNA(Asx) + AMP + diphosphate. Aspartyl-tRNA synthetase with relaxed tRNA specificity since it is able to aspartylate not only its cognate tRNA(Asp) but also tRNA(Asn). Reaction proceeds in two steps: L-aspartate is first activated by ATP to form Asp-AMP and then transferred to the acceptor end of tRNA(Asp/Asn). This chain is Aspartate--tRNA(Asp/Asn) ligase, found in Burkholderia multivorans (strain ATCC 17616 / 249).